Consider the following 374-residue polypeptide: Tuliposide A-converting enzyme b3, amyloplastic (374 aa).

Residues 1–68 (MSAALFCGPP…TNSSLSPSPT (68 aa)) constitute an amyloplast transit peptide. Ser226 acts as the Acyl-ester intermediate in catalysis. Active-site charge relay system residues include Asp316 and His348.

The protein belongs to the AB hydrolase superfamily. As to quaternary structure, homodimer. Highly expressed in pistil and bulb scales. Lower expression in stem, and barely detected in root, leaf, petal and stamen.

Its subcellular location is the plastid. It localises to the amyloplast. The enzyme catalyses 6-tuliposide A = tulipalin A + D-glucose. Its function is as follows. Lactone-forming carboxylesterases, specifically catalyzing intramolecular transesterification, but not hydrolysis. Involved in the biosynthesis of tulipalins, defensive chemicals that show antimicrobial activities against a broad range of strains of bacteria and fungi. Substrates are 6-tuliposide A &gt; 6-tuliposide B. This chain is Tuliposide A-converting enzyme b3, amyloplastic (TCEA-B3), found in Tulipa gesneriana (Garden tulip).